Here is a 281-residue protein sequence, read N- to C-terminus: Fructose-bisphosphate aldolase class 1 (281 aa).

The active-site Schiff-base intermediate with dihydroxyacetone-P is the K191.

This sequence belongs to the DeoC/FbaB aldolase family. As to quaternary structure, homooctamer.

It is found in the cytoplasm. The protein localises to the chromosome. The catalysed reaction is beta-D-fructose 1,6-bisphosphate = D-glyceraldehyde 3-phosphate + dihydroxyacetone phosphate. Activated by citrate. This Thermococcus kodakarensis (strain ATCC BAA-918 / JCM 12380 / KOD1) (Pyrococcus kodakaraensis (strain KOD1)) protein is Fructose-bisphosphate aldolase class 1 (fba).